The primary structure comprises 336 residues: MGADIGDLFEREEVELEYFSGKKIAVDAFNTLYQFISIIRQPDGTPLKDSQGRITSHLSGILYRVSNMVEVGIRPVFVFDGEPPEFKKAEIEERKKRRAEAEEMWIAALQAGDKDAKKYAQAAGRVDEYIVDSAKTLLSYMGIPFVDAPSEGEAQAAYMAAKGDVEYTGSQDYDSLLFGSPRLARNLAITGKRKLPGKNVYVDVKPEIIILESNLKRLGLTREQLIDIAILVGTDYNEGVKGVGVKKALNYIKTYGDIFRALKALKVNIDHVEEIRNFFLNPPVTDDYRIEFREPDFEKAIEFLCEEHDFSRERVEKALEKLKALKSTQATLERWF.

An N-domain region spans residues 1–98; that stretch reads MGADIGDLFE…AEIEERKKRR (98 aa). The Mg(2+) site is built by Asp27, Asp80, Glu151, Glu153, Asp172, Asp174, and Asp235. Residues 115–256 are I-domain; sequence DAKKYAQAAG…KALNYIKTYG (142 aa). Residues 328 to 336 form an interaction with PCNA region; that stretch reads TQATLERWF.

Belongs to the XPG/RAD2 endonuclease family. FEN1 subfamily. In terms of assembly, interacts with PCNA. PCNA stimulates the nuclease activity without altering cleavage specificity. Requires Mg(2+) as cofactor.

Structure-specific nuclease with 5'-flap endonuclease and 5'-3' exonuclease activities involved in DNA replication and repair. During DNA replication, cleaves the 5'-overhanging flap structure that is generated by displacement synthesis when DNA polymerase encounters the 5'-end of a downstream Okazaki fragment. Binds the unpaired 3'-DNA end and kinks the DNA to facilitate 5' cleavage specificity. Cleaves one nucleotide into the double-stranded DNA from the junction in flap DNA, leaving a nick for ligation. Also involved in the base excision repair (BER) pathway. Acts as a genome stabilization factor that prevents flaps from equilibrating into structures that lead to duplications and deletions. Also possesses 5'-3' exonuclease activity on nicked or gapped double-stranded DNA. The sequence is that of Flap endonuclease 1 from Archaeoglobus fulgidus (strain ATCC 49558 / DSM 4304 / JCM 9628 / NBRC 100126 / VC-16).